We begin with the raw amino-acid sequence, 1456 residues long: Sterol 3-beta-glucosyltransferase (1456 aa).

Positions 60-70 (ESDEEDGDEVE) are enriched in acidic residues. Disordered stretches follow at residues 60–113 (ESDE…SISH) and 128–156 (LSPH…TQSE). Positions 71-104 (TPSTTTTAVSPSATMSAPSPTATAPTPHSGTHTP) are enriched in low complexity. The segment covering 137-146 (SSHEASRRGS) has biased composition (basic and acidic residues). The GRAM 1 domain maps to 200-247 (QKLKGFAALDVDEQLIADYPVWLLKNVLIQGHLYITAKHMCFLSYLPR). One can recognise a PH domain in the interval 251–351 (ANIRSGTLVK…WVKALQKEIF (101 aa)). Disordered stretches follow at residues 462 to 512 (HSAH…PRLP) and 524 to 776 (DKCD…QDTF). Basic and acidic residues predominate over residues 496–508 (QPHERDEKRDSKL). A compositionally biased stretch (polar residues) spans 556-567 (LASQRTSSSTLF). Low complexity-rich tracts occupy residues 576-606 (SQPT…PASA) and 647-676 (GGAT…SSPG). The segment covering 677–696 (TPGGLGGPGAVGAGGPGVMG) has biased composition (gly residues). Over residues 719–735 (APHDPAAAAAAADAAAP) the composition is skewed to low complexity. Positions 827-893 (ERFQKRFALG…KVVENATKDS (67 aa)) constitute a GRAM 2 domain. 12 residues coordinate UDP-alpha-D-glucose: Ser-1004, Arg-1005, Asp-1007, Asn-1279, Asn-1307, His-1310, His-1323, Ser-1326, Gly-1327, Thr-1328, Asp-1347, and Gln-1348.

The protein belongs to the glycosyltransferase 28 family.

Its subcellular location is the cytoplasm. The protein resides in the membrane. The enzyme catalyses a sterol + UDP-alpha-D-glucose = a sterol 3-beta-D-glucoside + UDP + H(+). The catalysed reaction is ergosterol + UDP-alpha-D-glucose = ergosteryl 3-beta-D-glucoside + UDP + H(+). Its function is as follows. Sterol glycosyltransferase responsible for the glycosylation of ergosterol to form ergosterol-glucoside. The chain is Sterol 3-beta-glucosyltransferase from Yarrowia lipolytica (strain CLIB 122 / E 150) (Yeast).